The sequence spans 134 residues: Probable glycine cleavage system H protein (134 aa).

The region spanning 29–110 (TVLVGITDYA…PYGAWIAKIK (82 aa)) is the Lipoyl-binding domain. At Lys-70 the chain carries N6-lipoyllysine.

The protein belongs to the GcvH family. In terms of assembly, the glycine cleavage system is composed of four proteins: P, T, L and H. It depends on (R)-lipoate as a cofactor.

The glycine cleavage system catalyzes the degradation of glycine. The H protein shuttles the methylamine group of glycine from the P protein to the T protein. This chain is Probable glycine cleavage system H protein, found in Pyrococcus horikoshii (strain ATCC 700860 / DSM 12428 / JCM 9974 / NBRC 100139 / OT-3).